A 193-amino-acid polypeptide reads, in one-letter code: ATP synthase subunit b 1 (193 aa).

The tract at residues 9-28 (QEADHTAGETHTETGVAEGG) is disordered. A compositionally biased stretch (basic and acidic residues) spans 10–20 (EADHTAGETHT). The helical transmembrane segment at 40–59 (TYPSQLLWLAITFGLFYLFL) threads the bilayer.

This sequence belongs to the ATPase B chain family. F-type ATPases have 2 components, F(1) - the catalytic core - and F(0) - the membrane proton channel. F(1) has five subunits: alpha(3), beta(3), gamma(1), delta(1), epsilon(1). F(0) has three main subunits: a(1), b(2) and c(10-14). The alpha and beta chains form an alternating ring which encloses part of the gamma chain. F(1) is attached to F(0) by a central stalk formed by the gamma and epsilon chains, while a peripheral stalk is formed by the delta and b chains.

The protein localises to the cell inner membrane. F(1)F(0) ATP synthase produces ATP from ADP in the presence of a proton or sodium gradient. F-type ATPases consist of two structural domains, F(1) containing the extramembraneous catalytic core and F(0) containing the membrane proton channel, linked together by a central stalk and a peripheral stalk. During catalysis, ATP synthesis in the catalytic domain of F(1) is coupled via a rotary mechanism of the central stalk subunits to proton translocation. In terms of biological role, component of the F(0) channel, it forms part of the peripheral stalk, linking F(1) to F(0). This Chelativorans sp. (strain BNC1) protein is ATP synthase subunit b 1.